The following is a 500-amino-acid chain: Probable cytosol aminopeptidase (500 aa).

2 residues coordinate Mn(2+): K265 and D270. K277 is an active-site residue. Residues D288, D347, and E349 each coordinate Mn(2+). The active site involves R351.

Belongs to the peptidase M17 family. Mn(2+) is required as a cofactor.

It is found in the cytoplasm. It catalyses the reaction Release of an N-terminal amino acid, Xaa-|-Yaa-, in which Xaa is preferably Leu, but may be other amino acids including Pro although not Arg or Lys, and Yaa may be Pro. Amino acid amides and methyl esters are also readily hydrolyzed, but rates on arylamides are exceedingly low.. The catalysed reaction is Release of an N-terminal amino acid, preferentially leucine, but not glutamic or aspartic acids.. Presumably involved in the processing and regular turnover of intracellular proteins. Catalyzes the removal of unsubstituted N-terminal amino acids from various peptides. This is Probable cytosol aminopeptidase from Rickettsia rickettsii (strain Iowa).